A 395-amino-acid chain; its full sequence is FAD-dependent urate hydroxylase (395 aa).

FAD is bound by residues Gly-11, 30–31 (ER), Ser-43, and Met-125. Substrate contacts are provided by residues Asn-180, Arg-206, and 218–220 (YFF). FAD is bound by residues Asp-287 and 297–301 (GQGGC).

This sequence belongs to the FAD-dependent urate hydroxylase family. In terms of assembly, monomer. It depends on FAD as a cofactor.

It catalyses the reaction urate + NADH + O2 + H(+) = 5-hydroxyisourate + NAD(+) + H2O. Its pathway is purine metabolism; urate degradation. Functionally, catalyzes the hydroxylation of urate to 5-hydroxyisourate (HIU). Is likely to be involved in the urate degradation pathway to allantoin. Prefers NADH over NADPH as the electron donor. The sequence is that of FAD-dependent urate hydroxylase from Mycolicibacterium vanbaalenii (strain DSM 7251 / JCM 13017 / BCRC 16820 / KCTC 9966 / NRRL B-24157 / PYR-1) (Mycobacterium vanbaalenii).